A 698-amino-acid polypeptide reads, in one-letter code: MDELQSQTEREARILARRKRIQERLAALREGDHGGGKEGENKEEIGKGKQQIIESKRRLMRVKYRTDQDVSSVRVAGDDRENQHRIQEEQTRQDLRAKLLAEAEQSARQNAAVAMRWADLFSIEVPQDLYNEIESQRQACERIIASKDKLIGEIKGELKKKDDEFVKTLKRQAEDIDTLLQYMSRQFVEVQNAYKEELDEIENAFLQERSDLLESNRREMQELFDKRSRLEQDFMDRYLAAVEAYQSQLEGHRQMDAEEYHILKIRLETDIQNLEQHLEAMRATYQLNTEKLEYNYRVLKEREKENTQTIESQKKKLSRQRDILSSLKQRYAETDRRYRDDNMKLTDEYKRITEQFKDLQSKFRHFELVDTKKYKEVWGMKEADVAALVRQLLQADKVLHEQQLGWDWRPPDDAVFAPVHGDAGSGGGAAAAATGGAAGGAAAAGGVGPNGEEESEEDAAARVREAELAERLRDGRNWGALGLLCDEAGFLIDIKARNMIERLPKDEQGQVKAEAILRSLGIADGSAFDALLEALSADSNIELRAKGMVAPQGRGMAEEKSDRGGTAVLVHPDEAVRRLKAFVEVYGTGPSRGPGGGGGGGGGMSGPMRVQGAMRRAAEREQEFWSRMTHVISDKHTRVWGALEKQLEKYLALLQERAGSLRDVESLQHQNNELRALLNQYLSSRINDELQIPPTQII.

Composition is skewed to basic and acidic residues over residues 27–47 and 76–90; these read ALRE…EIGK and AGDD…QEEQ. Disordered regions lie at residues 27–50 and 71–90; these read ALRE…KGKQ and SSVR…QEEQ. A coiled-coil region spans residues 183 to 367; sequence MSRQFVEVQN…DLQSKFRHFE (185 aa). The segment at 425–461 is disordered; the sequence is SGGGAAAAATGGAAGGAAAAGGVGPNGEEESEEDAAA. The segment covering 436-449 has biased composition (gly residues); the sequence is GAAGGAAAAGGVGP. Residues 655–685 are a coiled coil; sequence QERAGSLRDVESLQHQNNELRALLNQYLSSR.

Belongs to the DRC1 family. In terms of assembly, component of the nexin-dynein regulatory complex (N-DRC). Interacts with DRC4 and DRC5.

The protein localises to the cytoplasm. The protein resides in the cytoskeleton. It localises to the cilium axoneme. It is found in the flagellum axoneme. Functionally, component of the nexin-dynein regulatory complex (N-DRC) a key regulator of ciliary/flagellar motility which maintains the alignment and integrity of the distal axoneme and regulates microtubule sliding in motile axonemes. Plays a critical role in the assembly of N-DRC and also stabilizes the assembly of multiple inner dynein arms and radial spokes. Coassembles with DRC2 to form a central scaffold needed for assembly of the N-DRC and its attachment to the outer doublet microtubules. The sequence is that of Dynein regulatory complex protein 1 (DRC1) from Chlamydomonas reinhardtii (Chlamydomonas smithii).